A 203-amino-acid polypeptide reads, in one-letter code: Ras-related protein Rab-8B (203 aa).

Residues Gly22–Ser29, Asp70–Gln74, and Asn128–Asp131 contribute to the GTP site. 2 S-geranylgeranyl cysteine lipidation sites follow: Cys202 and Cys203.

The protein belongs to the small GTPase superfamily. Rab family.

The protein localises to the cell membrane. Functionally, protein transport. Probably involved in vesicular traffic. The protein is Ras-related protein Rab-8B (rab8B) of Dictyostelium discoideum (Social amoeba).